A 576-amino-acid chain; its full sequence is V-type ATP synthase alpha chain (576 aa).

Position 238 to 245 (238 to 245) interacts with ATP; it reads GPFGAGKT.

It belongs to the ATPase alpha/beta chains family.

The catalysed reaction is ATP + H2O + 4 H(+)(in) = ADP + phosphate + 5 H(+)(out). In terms of biological role, produces ATP from ADP in the presence of a proton gradient across the membrane. The V-type alpha chain is a catalytic subunit. The chain is V-type ATP synthase alpha chain from Borrelia recurrentis (strain A1).